A 338-amino-acid chain; its full sequence is Anthranilate phosphoribosyltransferase (338 aa).

Residues Gly-81, Gly-84–Asp-85, Thr-89, Asn-91–Thr-94, Lys-109–Ser-117, and Ala-121 each bind 5-phospho-alpha-D-ribose 1-diphosphate. Position 81 (Gly-81) interacts with anthranilate. Ser-93 serves as a coordination point for Mg(2+). Asn-112 serves as a coordination point for anthranilate. Arg-167 is an anthranilate binding site. Residues Asp-226 and Glu-227 each coordinate Mg(2+).

It belongs to the anthranilate phosphoribosyltransferase family. Homodimer. Mg(2+) serves as cofactor.

The enzyme catalyses N-(5-phospho-beta-D-ribosyl)anthranilate + diphosphate = 5-phospho-alpha-D-ribose 1-diphosphate + anthranilate. The protein operates within amino-acid biosynthesis; L-tryptophan biosynthesis; L-tryptophan from chorismate: step 2/5. Functionally, catalyzes the transfer of the phosphoribosyl group of 5-phosphorylribose-1-pyrophosphate (PRPP) to anthranilate to yield N-(5'-phosphoribosyl)-anthranilate (PRA). This Cereibacter sphaeroides (strain ATCC 17029 / ATH 2.4.9) (Rhodobacter sphaeroides) protein is Anthranilate phosphoribosyltransferase.